The chain runs to 424 residues: Neurotensin receptor type 1 (424 aa).

Residues 1–23 (MHLNSSVPQGTPGEPDAQPFSGP) form a disordered region. Over 1 to 68 (MHLNSSVPQG…TDIYSKVLVT (68 aa)) the chain is Extracellular. N-linked (GlcNAc...) asparagine glycosylation is found at Asn-4, Asn-38, and Asn-42. The chain crosses the membrane as a helical span at residues 69-89 (AIYLALFVVGTVGNSVTAFTL). The Cytoplasmic segment spans residues 90-103 (ARKKSLQSLQSTVH). The chain crosses the membrane as a helical span at residues 104–123 (YHLGSLALSDLLILLLAMPV). Residues 124 to 143 (ELYNFIWVHHPWAFGDAGCR) lie on the Extracellular side of the membrane. An intrachain disulfide couples Cys-142 to Cys-225. Residues 144 to 165 (GYYFLRDACTYATALNVASLSV) form a helical membrane-spanning segment. Residues 166–185 (ERYLAICHPFKAKTLMSRSR) lie on the Cytoplasmic side of the membrane. A helical transmembrane segment spans residues 186–206 (TKKFISAIWLASALLAIPMLF). At 207 to 235 (TMGLQNRSGDGTHPGGLVCTPIVDTATVK) the chain is on the extracellular side. Residues 236–260 (VVIQVNTFMSFLFPMLVISILNTVI) traverse the membrane as a helical segment. At 261–308 (ANKLTVMVHQAAEQGRVCTVGTHNGLEHSTFNMTIEPGRVQALRHGVL) the chain is on the cytoplasmic side. A helical transmembrane segment spans residues 309 to 330 (VLRAVVIAFVVCWLPYHVRRLM). Residues 326–349 (VRRLMFCYISDEQWTTFLFDFYHY) are neurotensin binding. The Extracellular portion of the chain corresponds to 331–348 (FCYISDEQWTTFLFDFYH). The chain crosses the membrane as a helical span at residues 349–369 (YFYMLTNALFYVSSAINPILY). Over 370–424 (NLVSANFRQVFLSTLACLCPGWRHRRKKRPTFSRKPNSMSSNHAFSTSATRETLY) the chain is Cytoplasmic. 2 S-palmitoyl cysteine lipidation sites follow: Cys-386 and Cys-388. Positions 397–424 (KRPTFSRKPNSMSSNHAFSTSATRETLY) are disordered. Residues 403–424 (RKPNSMSSNHAFSTSATRETLY) are compositionally biased toward polar residues.

This sequence belongs to the G-protein coupled receptor 1 family. Neurotensin receptor subfamily. NTSR1 sub-subfamily. As to quaternary structure, interacts (palmitoylated form) with GNA11. N-glycosylated. In terms of processing, palmitoylated; this is required for normal localization at membrane rafts and normal GNA11-mediated activation of down-stream signaling cascades. The palmitoylation level increases in response to neurotensin treatment. Detected in brain and small intestine.

The protein resides in the cell membrane. It localises to the membrane raft. G-protein coupled receptor for the tridecapeptide neurotensin (NTS). Signaling is effected via G proteins that activate a phosphatidylinositol-calcium second messenger system. Signaling leads to the activation of downstream MAP kinases and protects cells against apoptosis. This Rattus norvegicus (Rat) protein is Neurotensin receptor type 1 (Ntsr1).